Here is an 87-residue protein sequence, read N- to C-terminus: Small ribosomal subunit protein bS20 (87 aa).

Belongs to the bacterial ribosomal protein bS20 family.

Functionally, binds directly to 16S ribosomal RNA. The polypeptide is Small ribosomal subunit protein bS20 (Halothermothrix orenii (strain H 168 / OCM 544 / DSM 9562)).